Here is a 191-residue protein sequence, read N- to C-terminus: Apoptosis regulator BHRF1 (191 aa).

The segment at 1 to 18 (MAYSTREILLALCIRDSR) is interaction with host VRK2. N22 carries an N-linked (GlcNAc...) asparagine; by host glycan. The BH1 signature appears at 89 to 109 (EIFHRGDPSLGRALAWMAWCM). An interaction with host VRK2 region spans residues 89–142 (EIFHRGDPSLGRALAWMAWCMHACRTLCCNQSTPYYVVDLSVRGMLEASEGLDG). Residue N118 is glycosylated (N-linked (GlcNAc...) asparagine; by host). Residues 142–157 (GWIHQQGGWSTLIEDN) carry the BH2 motif. The chain crosses the membrane as a helical span at residues 166-186 (WTLFLAGLTLSLLVICSYLFI).

This sequence belongs to the Bcl-2 family. Interacts with isoform 1 of host VRK2; this interaction is involved in protecting cells from apoptosis. Interacts with host PRA1; this interaction seems to modulate BHRF1 anti-apoptotic activity. Interacts with host BCL2L11. Interacts with host BAD and BBC3. Interacts with BALF1; BALF1 acting as a negative regulator of the survival function of BHRF1. Interacts with host BECN1.

The protein localises to the host membrane. It localises to the host mitochondrion. In terms of biological role, prevents premature death of the host cell during virus production, which would otherwise reduce the amount of progeny virus. Acts as a host B-cell leukemia/lymphoma 2 (Bcl-2) homolog, and interacts with pro-apoptotic proteins to prevent mitochondria permeabilization, release of cytochrome c and subsequent apoptosis of the host cell. In addition, plays a role in the inhibiton of host BECN1-mediated starvation-induced autophagy without affecting basal levels of autophagy. This Homo sapiens (Human) protein is Apoptosis regulator BHRF1.